Consider the following 257-residue polypeptide: Ribonuclease HII (257 aa).

In terms of domain architecture, RNase H type-2 spans 72 to 257 (TYIAGIDEVG…FAPIKDMIQK (186 aa)). Residues aspartate 78, glutamate 79, and aspartate 170 each coordinate a divalent metal cation.

The protein belongs to the RNase HII family. Requires Mn(2+) as cofactor. Mg(2+) serves as cofactor.

The protein resides in the cytoplasm. It carries out the reaction Endonucleolytic cleavage to 5'-phosphomonoester.. In terms of biological role, endonuclease that specifically degrades the RNA of RNA-DNA hybrids. The protein is Ribonuclease HII of Bacillus cereus (strain ATCC 14579 / DSM 31 / CCUG 7414 / JCM 2152 / NBRC 15305 / NCIMB 9373 / NCTC 2599 / NRRL B-3711).